The chain runs to 1092 residues: Electroneutral sodium bicarbonate exchanger 1 (1092 aa).

3 disordered regions span residues 1-26, 55-95, and 243-263; these read MPAG…VDQG, LGRQ…HDTP, and KKQS…PQSA. Over 1-478 the chain is Extracellular; the sequence is MPAGSNEPDG…DYRDALSLQC (478 aa). The segment covering 58–76 has biased composition (basic residues); sequence QSHRHHRTHGQKHRRRGGR. A compositionally biased stretch (basic and acidic residues) spans 243–255; it reads KKQSDPHSMDRDG. Residues 479-499 form a helical membrane-spanning segment; that stretch reads LASFLFLYCACMSPVITFGGL. Residues 500–507 are Cytoplasmic-facing; sequence LGEATEGR. The helical transmembrane segment at 508 to 528 threads the bilayer; that stretch reads ISAIESLFGASMTGIAYSLFA. Residues 529–565 lie on the Extracellular side of the membrane; that stretch reads GQPLTILGSTGPVLVFEKILFKFCKDYALSYLSLRAC. A helical transmembrane segment spans residues 566 to 586; sequence IGLWTAFLCIVLVATDASSLV. Residues 587–595 lie on the Cytoplasmic side of the membrane; sequence CYITRFTEE. The helical transmembrane segment at 596-616 threads the bilayer; the sequence is AFASLICIIFIYEAIEKLIHL. At 617–687 the chain is on the extracellular side; that stretch reads AETYPIHMHS…EFIGSACGHH (71 aa). Cystine bridges form between Cys-636/Cys-684 and Cys-638/Cys-672. Asn-646 and Asn-666 each carry an N-linked (GlcNAc) asparagine glycan. Residues 688–708 form a helical membrane-spanning segment; the sequence is GPYTPDVLFWSCILFFATFIV. At 709 to 731 the chain is on the cytoplasmic side; that stretch reads SSTLKTFKTSRYFPTRVRSTVSD. The chain crosses the membrane as a helical span at residues 732-752; the sequence is FAVFLTIFTMVILDFLIGVPS. At 753–778 the chain is on the extracellular side; the sequence is PKLQVPSVFKPTRDDRGWFISPIGPN. Residues 779–799 traverse the membrane as a helical segment; sequence PWWTVIAAIIPALLCTILIFM. Residues 800–824 are Cytoplasmic-facing; it reads DQQITAVIINRKEHKLKKGCGYHLD. A helical transmembrane segment spans residues 825–845; that stretch reads LLVVAIMLGVCSLMGLPWFVA. The Extracellular segment spans residues 846 to 881; sequence ATVLSITHVNSLKLESECSAPGEQPKFLGIREQRVT. Residues 882-902 traverse the membrane as a helical segment; sequence GLMIFVLMGCSVFMTAVLKFI. At 903–904 the chain is on the cytoplasmic side; that stretch reads PM. The chain crosses the membrane as a helical span at residues 905 to 925; sequence PVLYGVFLYMGVSSLQGIQFF. At 926–962 the chain is on the extracellular side; the sequence is DRLKLFGMPAKHQPDFIYLRHVPLRKVHLFTLVQLTC. The chain crosses the membrane as a helical span at residues 963–983; that stretch reads LVLLWVIKASPAAIVFPMMVL. Topologically, residues 984-1092 are cytoplasmic; the sequence is ALVFVRKVMD…GNTKEKSPFN (109 aa).

It belongs to the anion exchanger (TC 2.A.31) family. Homodimer. As to expression, expressed in the Purkinje cells and dendrites in the molecular layer of the cerebellum (at protein level). Expressed in the hippocampal neurons (at protein level). Strong expression observed in testis and moderate expression in kidney inner medulla, the submandibular gland, eye, cerebrum and cerebellum.

Its subcellular location is the cell membrane. The protein localises to the apical cell membrane. The protein resides in the basolateral cell membrane. It localises to the cytoplasmic vesicle. It is found in the secretory vesicle. Its subcellular location is the synaptic vesicle membrane. It catalyses the reaction 2 hydrogencarbonate(out) + chloride(in) + Na(+)(out) = 2 hydrogencarbonate(in) + chloride(out) + Na(+)(in). Its function is as follows. Mediates electroneutral sodium- and carbonate-dependent chloride-HCO3(-) exchange with a Na(+):HCO3(-) stoichiometry of 2:1. Plays a major role in pH regulation in neurons. Mediates sodium reabsorption in the renal cortical collecting ducts. In Rattus norvegicus (Rat), this protein is Electroneutral sodium bicarbonate exchanger 1.